A 201-amino-acid polypeptide reads, in one-letter code: Mediator of RNA polymerase II transcription subunit 22 (201 aa).

Positions 93–123 (SVNEAIDQRNQQLRALQEECDRKLIALRDEV) form a coiled coil. Residues 166–201 (LSAPLLASPEPSAGGPLQAAAPTHSHAGGPGPTEHA) are disordered.

Component of the Mediator complex, which is composed of MED1, MED4, MED6, MED7, MED8, MED9, MED10, MED11, MED12, MED13, MED13L, MED14, MED15, MED16, MED17, MED18, MED19, MED20, MED21, MED22, MED23, MED24, MED25, MED26, MED27, MED29, MED30, MED31, CCNC, CDK8 and CDC2L6/CDK11. The MED12, MED13, CCNC and CDK8 subunits form a distinct module termed the CDK8 module. Mediator containing the CDK8 module is less active than Mediator lacking this module in supporting transcriptional activation. Individual preparations of the Mediator complex lacking one or more distinct subunits have been variously termed ARC, CRSP, DRIP, PC2, SMCC and TRAP.

The protein localises to the nucleus. Functionally, component of the Mediator complex, a coactivator involved in the regulated transcription of nearly all RNA polymerase II-dependent genes. Mediator functions as a bridge to convey information from gene-specific regulatory proteins to the basal RNA polymerase II transcription machinery. Mediator is recruited to promoters by direct interactions with regulatory proteins and serves as a scaffold for the assembly of a functional preinitiation complex with RNA polymerase II and the general transcription factors. The chain is Mediator of RNA polymerase II transcription subunit 22 (MED22) from Bos taurus (Bovine).